A 335-amino-acid chain; its full sequence is Eukaryotic translation initiation factor 3 subunit H-A (335 aa).

Residues Ile-22 to Leu-156 enclose the MPN domain. The segment covering Gln-254–Gln-272 has biased composition (low complexity). Positions Gln-254–Glu-282 are disordered.

Belongs to the eIF-3 subunit H family. In terms of assembly, component of the eukaryotic translation initiation factor 3 (eIF-3) complex, which is composed of 13 subunits: eif3a, eif3b, eif3c, eif3d, eif3e, eif3f, eif3g, eif3h, eif3i, eif3j, eif3k, eif3l and eif3m.

The protein localises to the cytoplasm. Functionally, component of the eukaryotic translation initiation factor 3 (eIF-3) complex, which is involved in protein synthesis of a specialized repertoire of mRNAs and, together with other initiation factors, stimulates binding of mRNA and methionyl-tRNAi to the 40S ribosome. The eIF-3 complex specifically targets and initiates translation of a subset of mRNAs involved in cell proliferation. This is Eukaryotic translation initiation factor 3 subunit H-A (eif3ha) from Danio rerio (Zebrafish).